Reading from the N-terminus, the 319-residue chain is Methionyl-tRNA formyltransferase (319 aa).

112–115 (SILP) provides a ligand contact to (6S)-5,6,7,8-tetrahydrofolate.

This sequence belongs to the Fmt family.

The catalysed reaction is L-methionyl-tRNA(fMet) + (6R)-10-formyltetrahydrofolate = N-formyl-L-methionyl-tRNA(fMet) + (6S)-5,6,7,8-tetrahydrofolate + H(+). Its function is as follows. Attaches a formyl group to the free amino group of methionyl-tRNA(fMet). The formyl group appears to play a dual role in the initiator identity of N-formylmethionyl-tRNA by promoting its recognition by IF2 and preventing the misappropriation of this tRNA by the elongation apparatus. The polypeptide is Methionyl-tRNA formyltransferase (Shewanella denitrificans (strain OS217 / ATCC BAA-1090 / DSM 15013)).